Consider the following 259-residue polypeptide: Ribonuclease PH (259 aa).

Phosphate is bound by residues Arg-88 and 126–128; that span reads GTR.

Belongs to the RNase PH family. Homohexameric ring arranged as a trimer of dimers.

It carries out the reaction tRNA(n+1) + phosphate = tRNA(n) + a ribonucleoside 5'-diphosphate. Its function is as follows. Phosphorolytic 3'-5' exoribonuclease that plays an important role in tRNA 3'-end maturation. Removes nucleotide residues following the 3'-CCA terminus of tRNAs; can also add nucleotides to the ends of RNA molecules by using nucleoside diphosphates as substrates, but this may not be physiologically important. Probably plays a role in initiation of 16S rRNA degradation (leading to ribosome degradation) during starvation. This chain is Ribonuclease PH, found in Mycobacterium bovis (strain ATCC BAA-935 / AF2122/97).